The primary structure comprises 80 residues: Acyl carrier protein (80 aa).

The region spanning 4-79 (EAILEKVRSI…DAVKYIEDKQ (76 aa)) is the Carrier domain. Serine 39 bears the O-(pantetheine 4'-phosphoryl)serine mark.

Belongs to the acyl carrier protein (ACP) family. In terms of processing, 4'-phosphopantetheine is transferred from CoA to a specific serine of apo-ACP by AcpS. This modification is essential for activity because fatty acids are bound in thioester linkage to the sulfhydryl of the prosthetic group.

It is found in the cytoplasm. The protein operates within lipid metabolism; fatty acid biosynthesis. Its function is as follows. Carrier of the growing fatty acid chain in fatty acid biosynthesis. The sequence is that of Acyl carrier protein from Prochlorococcus marinus (strain MIT 9313).